The chain runs to 215 residues: Small ribosomal subunit protein uS7 (215 aa).

This sequence belongs to the universal ribosomal protein uS7 family. In terms of assembly, part of the 30S ribosomal subunit.

In terms of biological role, one of the primary rRNA binding proteins, it binds directly to 16S rRNA where it nucleates assembly of the head domain of the 30S subunit. Is located at the subunit interface close to the decoding center. This Thermococcus celer protein is Small ribosomal subunit protein uS7.